The primary structure comprises 665 residues: Succinate dehydrogenase [ubiquinone] flavoprotein subunit A, mitochondrial (665 aa).

The N-terminal 45 residues, 1–45, are a transit peptide targeting the mitochondrion; sequence MALLKVAPSRLLSRALQLASRVQNCTPTVTTARRNFHFTVYGRKD. Residues Ala-72, Ala-75, Thr-94, Lys-95, and Ser-101 each coordinate FAD. Position 102 is a tele-8alpha-FAD histidine (His-102). Thr-103, Gly-108, Ala-224, and Asp-278 together coordinate FAD. Residues His-299, Arg-343, and His-410 each coordinate oxaloacetate. Arg-343 (proton acceptor) is an active-site residue. Glu-443 provides a ligand contact to FAD. Oxaloacetate contacts are provided by Arg-454 and Ala-457. Residues Ser-459 and Leu-460 each coordinate FAD.

This sequence belongs to the FAD-dependent oxidoreductase 2 family. FRD/SDH subfamily. In terms of assembly, component of complex II composed of four subunits: a flavoprotein (FP), an iron-sulfur protein (IP), and a cytochrome b composed of a large and a small subunit. FAD serves as cofactor.

The protein resides in the mitochondrion inner membrane. The catalysed reaction is a ubiquinone + succinate = a ubiquinol + fumarate. It carries out the reaction (R)-malate + a quinone = enol-oxaloacetate + a quinol. It catalyses the reaction (S)-malate + a quinone = enol-oxaloacetate + a quinol. It participates in carbohydrate metabolism; tricarboxylic acid cycle; fumarate from succinate (eukaryal route): step 1/1. Enol-oxaloacetate inhibits the succinate dehydrogenase activity. Flavoprotein (FP) subunit of succinate dehydrogenase (SDH) that is involved in complex II of the mitochondrial electron transport chain and is responsible for transferring electrons from succinate to ubiquinone (coenzyme Q). SDH also oxidizes malate to the non-canonical enol form of oxaloacetate, enol-oxaloacetate. Enol-oxaloacetate, which is a potent inhibitor of the succinate dehydrogenase activity, is further isomerized into keto-oxaloacetate. The polypeptide is Succinate dehydrogenase [ubiquinone] flavoprotein subunit A, mitochondrial (sdha-a) (Xenopus laevis (African clawed frog)).